We begin with the raw amino-acid sequence, 278 residues long: Energy-coupling factor transporter ATP-binding protein EcfA1 (278 aa).

The 235-residue stretch at 5–239 (LLLESVSYQY…QDKLEAAGID (235 aa)) folds into the ABC transporter domain. 39 to 46 (GPNGSGKS) is a binding site for ATP.

This sequence belongs to the ABC transporter superfamily. Energy-coupling factor EcfA family. Forms a stable energy-coupling factor (ECF) transporter complex composed of 2 membrane-embedded substrate-binding proteins (S component), 2 ATP-binding proteins (A component) and 2 transmembrane proteins (T component).

The protein localises to the cell membrane. In terms of biological role, ATP-binding (A) component of a common energy-coupling factor (ECF) ABC-transporter complex. Unlike classic ABC transporters this ECF transporter provides the energy necessary to transport a number of different substrates. The sequence is that of Energy-coupling factor transporter ATP-binding protein EcfA1 from Halalkalibacterium halodurans (strain ATCC BAA-125 / DSM 18197 / FERM 7344 / JCM 9153 / C-125) (Bacillus halodurans).